A 278-amino-acid polypeptide reads, in one-letter code: 3-methyl-2-oxobutanoate hydroxymethyltransferase (278 aa).

The Mg(2+) site is built by aspartate 49 and aspartate 88. Residues 49–50 (DS), aspartate 88, and lysine 118 contribute to the 3-methyl-2-oxobutanoate site. Glutamate 120 contributes to the Mg(2+) binding site. The Proton acceptor role is filled by glutamate 186.

This sequence belongs to the PanB family. Homodecamer; pentamer of dimers. The cofactor is Mg(2+).

It is found in the cytoplasm. It catalyses the reaction 3-methyl-2-oxobutanoate + (6R)-5,10-methylene-5,6,7,8-tetrahydrofolate + H2O = 2-dehydropantoate + (6S)-5,6,7,8-tetrahydrofolate. The protein operates within cofactor biosynthesis; (R)-pantothenate biosynthesis; (R)-pantoate from 3-methyl-2-oxobutanoate: step 1/2. Catalyzes the reversible reaction in which hydroxymethyl group from 5,10-methylenetetrahydrofolate is transferred onto alpha-ketoisovalerate to form ketopantoate. This chain is 3-methyl-2-oxobutanoate hydroxymethyltransferase, found in Bordetella parapertussis (strain 12822 / ATCC BAA-587 / NCTC 13253).